The following is a 234-amino-acid chain: Large ribosomal subunit protein uL1 (234 aa).

The protein belongs to the universal ribosomal protein uL1 family. In terms of assembly, part of the 50S ribosomal subunit.

Functionally, binds directly to 23S rRNA. The L1 stalk is quite mobile in the ribosome, and is involved in E site tRNA release. Protein L1 is also a translational repressor protein, it controls the translation of the L11 operon by binding to its mRNA. The polypeptide is Large ribosomal subunit protein uL1 (Helicobacter pylori (strain G27)).